The primary structure comprises 529 residues: MFTVLTRQPCEQAGLKALYRTPTIIALVVLLVSIVVLVSITVIQIHKQEVLPPGLKYGIVLDAGSSRTTVYVYQWPAEKENNTGVVSQTFKCSVKGSGISSYGNNPQDVPRAFEECMQKVKGQVPSHLHGSTPIHLGATAGMRLLRLQNETAANEVLESIQSYFKSQPFDFRGAQIISGQEEGVYGWITANYLMGNFLEKNLWHMWVHPHGVETTGALDLGGASTQISFVAGEKMDLNTSDIMQVSLYGYVYTLYTHSFQCYGRNEAEKKFLAMLLQNSPTKNHLTNPCYPRDYSISFTMGHVFDSLCTVDQRPESYNPNDVITFEGTGDPSLCKEKVASIFDFKACHDQETCSFDGVYQPKIKGPFVAFAGFYYTASALNLSGSFSLDTFNSSTWNFCSQNWSQLPLLLPKFDEVYARSYCFSANYIYHLFVNGYKFTEETWPQIHFEKEVGNSSIAWSLGYMLSLTNQIPAESPLIRLPIEPPVFVGTLAFFTAAALLCLAFLAYLCSATRRKRHSEHAFDHAVDSD.

The Cytoplasmic portion of the chain corresponds to 1-22 (MFTVLTRQPCEQAGLKALYRTP). Residues 23–43 (TIIALVVLLVSIVVLVSITVI) traverse the membrane as a helical segment. Topologically, residues 44–485 (QIHKQEVLPP…PLIRLPIEPP (442 aa)) are extracellular. An N-linked (GlcNAc...) asparagine glycan is attached at N81. A disulfide bridge links C92 with C116. N149 is a glycosylation site (N-linked (GlcNAc...) asparagine). E182 acts as the Proton acceptor in catalysis. 222-226 (GASTQ) is a binding site for ATP. Residue N238 is glycosylated (N-linked (GlcNAc...) asparagine). Disulfide bonds link C261–C308, C289–C334, and C347–C353. N381, N392, N402, and N454 each carry an N-linked (GlcNAc...) asparagine glycan. An intrachain disulfide couples C399 to C422. The helical transmembrane segment at 486–506 (VFVGTLAFFTAAALLCLAFLA) threads the bilayer. At 507-529 (YLCSATRRKRHSEHAFDHAVDSD) the chain is on the cytoplasmic side.

The protein belongs to the GDA1/CD39 NTPase family. The cofactor is Ca(2+). It depends on Mg(2+) as a cofactor. Expressed in adult brain, pancreas, spleen and prostate. Moderate or low expression is seen in most tissues. Not expressed in liver and peripheral blood leukocytes.

The protein localises to the cell membrane. The enzyme catalyses a ribonucleoside 5'-triphosphate + 2 H2O = a ribonucleoside 5'-phosphate + 2 phosphate + 2 H(+). In terms of biological role, has a threefold preference for the hydrolysis of ATP over ADP. The protein is Ectonucleoside triphosphate diphosphohydrolase 3 (ENTPD3) of Homo sapiens (Human).